The chain runs to 347 residues: Holliday junction branch migration complex subunit RuvB (347 aa).

The interval 1-185 (MSDDPTTPEL…FGFTAHLEFY (185 aa)) is large ATPase domain (RuvB-L). Residues Leu-24, Arg-25, Gly-66, Lys-69, Thr-70, Thr-71, 132 to 134 (EDF), Arg-175, Tyr-185, and Arg-222 contribute to the ATP site. Position 70 (Thr-70) interacts with Mg(2+). Residues 186–255 (DEGELAQVLA…AVHAALELYD (70 aa)) are small ATPAse domain (RuvB-S). The interval 258-347 (ELGLDRLDRA…SQPPSLMDDL (90 aa)) is head domain (RuvB-H). The DNA site is built by Arg-313 and Arg-318.

It belongs to the RuvB family. As to quaternary structure, homohexamer. Forms an RuvA(8)-RuvB(12)-Holliday junction (HJ) complex. HJ DNA is sandwiched between 2 RuvA tetramers; dsDNA enters through RuvA and exits via RuvB. An RuvB hexamer assembles on each DNA strand where it exits the tetramer. Each RuvB hexamer is contacted by two RuvA subunits (via domain III) on 2 adjacent RuvB subunits; this complex drives branch migration. In the full resolvosome a probable DNA-RuvA(4)-RuvB(12)-RuvC(2) complex forms which resolves the HJ.

It is found in the cytoplasm. The enzyme catalyses ATP + H2O = ADP + phosphate + H(+). Functionally, the RuvA-RuvB-RuvC complex processes Holliday junction (HJ) DNA during genetic recombination and DNA repair, while the RuvA-RuvB complex plays an important role in the rescue of blocked DNA replication forks via replication fork reversal (RFR). RuvA specifically binds to HJ cruciform DNA, conferring on it an open structure. The RuvB hexamer acts as an ATP-dependent pump, pulling dsDNA into and through the RuvAB complex. RuvB forms 2 homohexamers on either side of HJ DNA bound by 1 or 2 RuvA tetramers; 4 subunits per hexamer contact DNA at a time. Coordinated motions by a converter formed by DNA-disengaged RuvB subunits stimulates ATP hydrolysis and nucleotide exchange. Immobilization of the converter enables RuvB to convert the ATP-contained energy into a lever motion, pulling 2 nucleotides of DNA out of the RuvA tetramer per ATP hydrolyzed, thus driving DNA branch migration. The RuvB motors rotate together with the DNA substrate, which together with the progressing nucleotide cycle form the mechanistic basis for DNA recombination by continuous HJ branch migration. Branch migration allows RuvC to scan DNA until it finds its consensus sequence, where it cleaves and resolves cruciform DNA. This chain is Holliday junction branch migration complex subunit RuvB, found in Leifsonia xyli subsp. xyli (strain CTCB07).